Here is a 506-residue protein sequence, read N- to C-terminus: Galactose/methyl galactoside import ATP-binding protein MglA (506 aa).

2 consecutive ABC transporter domains span residues 14–249 (LEMS…VGRS) and 264–506 (VILE…SLHL). 46 to 53 (GENGAGKS) is an ATP binding site.

Belongs to the ABC transporter superfamily. Galactose/methyl galactoside importer (TC 3.A.1.2.3) family. In terms of assembly, the complex is composed of one ATP-binding protein (MglA), two transmembrane proteins (MglC) and a solute-binding protein (MglB).

Its subcellular location is the cell inner membrane. The catalysed reaction is D-galactose(out) + ATP + H2O = D-galactose(in) + ADP + phosphate + H(+). It carries out the reaction methyl beta-D-galactoside(out) + ATP + H2O = methyl beta-D-galactoside(in) + ADP + phosphate + H(+). In terms of biological role, part of the ABC transporter complex MglABC involved in galactose/methyl galactoside import. Responsible for energy coupling to the transport system. The sequence is that of Galactose/methyl galactoside import ATP-binding protein MglA from Yersinia pestis bv. Antiqua (strain Antiqua).